Reading from the N-terminus, the 452-residue chain is Heat shock protein 83 (452 aa).

ATP is bound at residue Arg-124. The TPR repeat-binding motif lies at 448–452 (MEQVD).

It belongs to the heat shock protein 90 family. Homodimer.

It localises to the cytoplasm. In terms of biological role, molecular chaperone that promotes the maturation, structural maintenance and proper regulation of specific target proteins involved for instance in cell cycle control and signal transduction. Undergoes a functional cycle that is linked to its ATPase activity. This cycle probably induces conformational changes in the client proteins, thereby causing their activation. Interacts dynamically with various co-chaperones that modulate its substrate recognition, ATPase cycle and chaperone function. This Leishmania donovani protein is Heat shock protein 83 (HSP83).